A 948-amino-acid polypeptide reads, in one-letter code: Sensor histidine kinase RcsC (948 aa).

Residues 1-20 are Cytoplasmic-facing; sequence MKYLASFRTTLKVSRYLFRA. Residues 21–41 traverse the membrane as a helical segment; sequence LALLIWLLIAFVSVFYIVNAL. The Periplasmic portion of the chain corresponds to 42 to 313; sequence HQRESEIRQE…PVDLVLERIR (272 aa). Residues 314-334 form a helical membrane-spanning segment; the sequence is ILILNAILLNVLVGAGLFTLA. Over 335-948 the chain is Cytoplasmic; that stretch reads RMYERRIFIP…YAERVRKTRA (614 aa). One can recognise a PAS domain in the interval 357-425; the sequence is QFNRKIVASA…VLTSNNTNLQ (69 aa). A Histidine kinase domain is found at 476 to 692; sequence TVSHELRTPL…QFTLRIPLYG (217 aa). His-479 is subject to Phosphohistidine; by autocatalysis. Residues 705–805 form the ABL domain; it reads AGTCCWLAVR…ARIYSIELDS (101 aa). The region spanning 826-940 is the Response regulatory domain; sequence MILVVDDHPI…VLKQTLAVYA (115 aa). Position 875 is a 4-aspartylphosphate (Asp-875).

The protein belongs to the RcsC family. As to quaternary structure, interacts with RcsD. Autophosphorylated. Activation probably requires a transfer of a phosphate group from a His in the transmitter domain to an Asp in the receiver domain.

The protein localises to the cell inner membrane. It catalyses the reaction ATP + protein L-histidine = ADP + protein N-phospho-L-histidine.. In terms of biological role, component of the Rcs signaling system, which controls transcription of numerous genes. RcsC functions as a membrane-associated protein kinase that phosphorylates RcsD in response to environmental signals. The phosphoryl group is then transferred to the response regulator RcsB. The chain is Sensor histidine kinase RcsC from Salmonella typhimurium (strain LT2 / SGSC1412 / ATCC 700720).